Reading from the N-terminus, the 419-residue chain is 3-oxo-isoapionate-4-phosphate decarboxylase (419 aa).

Residues Lys179, Asp181, and Glu182 each coordinate Mg(2+). Position 179 is an N6-carboxylysine (Lys179).

The protein belongs to the RuBisCO large chain family. The cofactor is Mg(2+).

It catalyses the reaction 3-oxoisoapionate 4-phosphate + H(+) = L-erythrulose 1-phosphate + CO2. It functions in the pathway carbohydrate metabolism. Involved in catabolism of D-apiose. Catalyzes the decarboxylation of 3-oxo-isoapionate 4-phosphate to L-erythrulose 1-phosphate. This chain is 3-oxo-isoapionate-4-phosphate decarboxylase, found in Rhizobium rhizogenes (strain K84 / ATCC BAA-868) (Agrobacterium radiobacter).